Reading from the N-terminus, the 461-residue chain is tRNA modification GTPase MnmE (461 aa).

Positions 32, 89, and 128 each coordinate (6S)-5-formyl-5,6,7,8-tetrahydrofolate. The region spanning 224–387 is the TrmE-type G domain; that stretch reads GHALSIVGKP…LSQKISEFFP (164 aa). K(+) is bound at residue Asn-234. GTP contacts are provided by residues 234–239, 253–259, and 278–281; these read NAGKSS, SDIKGTT, and DTAG. Position 238 (Ser-238) interacts with Mg(2+). 3 residues coordinate K(+): Ser-253, Ile-255, and Thr-258. A Mg(2+)-binding site is contributed by Thr-259. Residue Lys-461 participates in (6S)-5-formyl-5,6,7,8-tetrahydrofolate binding.

The protein belongs to the TRAFAC class TrmE-Era-EngA-EngB-Septin-like GTPase superfamily. TrmE GTPase family. Homodimer. Heterotetramer of two MnmE and two MnmG subunits. K(+) is required as a cofactor.

The protein resides in the cytoplasm. Its function is as follows. Exhibits a very high intrinsic GTPase hydrolysis rate. Involved in the addition of a carboxymethylaminomethyl (cmnm) group at the wobble position (U34) of certain tRNAs, forming tRNA-cmnm(5)s(2)U34. The protein is tRNA modification GTPase MnmE of Helicobacter pylori (strain J99 / ATCC 700824) (Campylobacter pylori J99).